The chain runs to 177 residues: ATP synthase subunit delta 1 (177 aa).

The protein belongs to the ATPase delta chain family. F-type ATPases have 2 components, F(1) - the catalytic core - and F(0) - the membrane proton channel. F(1) has five subunits: alpha(3), beta(3), gamma(1), delta(1), epsilon(1). F(0) has three main subunits: a(1), b(2) and c(10-14). The alpha and beta chains form an alternating ring which encloses part of the gamma chain. F(1) is attached to F(0) by a central stalk formed by the gamma and epsilon chains, while a peripheral stalk is formed by the delta and b chains.

It localises to the cell inner membrane. In terms of biological role, f(1)F(0) ATP synthase produces ATP from ADP in the presence of a proton or sodium gradient. F-type ATPases consist of two structural domains, F(1) containing the extramembraneous catalytic core and F(0) containing the membrane proton channel, linked together by a central stalk and a peripheral stalk. During catalysis, ATP synthesis in the catalytic domain of F(1) is coupled via a rotary mechanism of the central stalk subunits to proton translocation. This protein is part of the stalk that links CF(0) to CF(1). It either transmits conformational changes from CF(0) to CF(1) or is implicated in proton conduction. The chain is ATP synthase subunit delta 1 from Photobacterium profundum (strain SS9).